A 335-amino-acid polypeptide reads, in one-letter code: Fructokinase-2 (335 aa).

The protein belongs to the carbohydrate kinase PfkB family. In terms of tissue distribution, expressed in roots, at higher levels in stems, and hardly detectable in leaves.

It carries out the reaction D-fructose + ATP = D-fructose 6-phosphate + ADP + H(+). It participates in glycan biosynthesis; starch biosynthesis. Its activity is regulated as follows. Inhibited at high fructose. Its function is as follows. May play an important role in maintaining the flux of carbon towards starch formation. May also be involved in a sugar-sensing pathway. The chain is Fructokinase-2 (FRK2) from Zea mays (Maize).